A 177-amino-acid polypeptide reads, in one-letter code: Inorganic pyrophosphatase (177 aa).

Substrate-binding residues include Lys-31, Arg-45, and Tyr-57. 3 residues coordinate Mg(2+): Asp-67, Asp-72, and Asp-104. Substrate is bound at residue Tyr-141.

This sequence belongs to the PPase family. In terms of assembly, homohexamer. Also forms homotrimers, but the trimeric form is 23% less active than the hexamer. In fact, likely forms a dimer of trimers. It depends on Mg(2+) as a cofactor.

The protein localises to the cytoplasm. It carries out the reaction diphosphate + H2O = 2 phosphate + H(+). With respect to regulation, inhibited by sodium fluoride (NaF) in vitro, similarly to other class A type inorganic pyrophosphatases. Functionally, catalyzes the hydrolysis of inorganic pyrophosphate (PPi) forming two phosphate ions. The hydrolysis of PPi by inorganic pyrophosphatase releases a considerable amount of energy that can drive unfavorable biochemical transformations to completion. Is not active on nucleoside triphosphates (ATP, TTP, GTP, or CTP) or nucleoside diphosphate (ADP). This Haloferax volcanii (strain ATCC 29605 / DSM 3757 / JCM 8879 / NBRC 14742 / NCIMB 2012 / VKM B-1768 / DS2) (Halobacterium volcanii) protein is Inorganic pyrophosphatase.